The sequence spans 215 residues: Abscisic acid receptor PYL6 (215 aa).

The segment at 54-209 (HVVGPSQCFS…NLQSLAKLAE (156 aa)) is START-like. A disulfide bond links Cys61 and Cys190. Abscisate-binding positions include Lys90, 120-125 (AAFSLE), 147-153 (RLMNYKS), and Glu174. Residues 116 to 120 (SGLPA) carry the Gate loop motif. A Latch loop motif is present at residues 146-148 (HRL).

It belongs to the PYR/PYL/RCAR abscisic acid intracellular receptor family. Monomer. Homodimer. Binds ABA on one subunit only. Interacts with HAB1, ABI1 and ABI2, and possibly with other PP2Cs. Binds to CARs protein in an ABA-independent manner, both at the plasma membrane and in the nucleus. Interacts directly with CAR1 and CAR4. Interacts with MYC2 in the nucleus. Interaction with MYC2 is increased in the presence of abscisic acid.

It localises to the cytoplasm. It is found in the nucleus. The protein localises to the cell membrane. In terms of biological role, receptor for abscisic acid (ABA) required for ABA-mediated responses such as stomatal closure and germination inhibition. Inhibits the activity of group-A protein phosphatases type 2C (PP2Cs) in an ABA-independent manner but more efficiently when activated by ABA. Can be activated by both (-)-ABA and (+)-ABA. May link ABA and jasmonate signaling pathways by modifying MYC2 transcriptional activity, and regulation of JAZ6 and JAZ8 gene expression by MYC2. The chain is Abscisic acid receptor PYL6 (PYL6) from Arabidopsis thaliana (Mouse-ear cress).